A 313-amino-acid chain; its full sequence is 4-hydroxy-3-methylbut-2-enyl diphosphate reductase (313 aa).

Residue cysteine 12 participates in [4Fe-4S] cluster binding. (2E)-4-hydroxy-3-methylbut-2-enyl diphosphate-binding residues include histidine 41 and histidine 74. Histidine 41 and histidine 74 together coordinate dimethylallyl diphosphate. Histidine 41 and histidine 74 together coordinate isopentenyl diphosphate. Cysteine 96 is a binding site for [4Fe-4S] cluster. Histidine 124 contributes to the (2E)-4-hydroxy-3-methylbut-2-enyl diphosphate binding site. Position 124 (histidine 124) interacts with dimethylallyl diphosphate. Isopentenyl diphosphate is bound at residue histidine 124. Glutamate 126 acts as the Proton donor in catalysis. Residue threonine 164 participates in (2E)-4-hydroxy-3-methylbut-2-enyl diphosphate binding. Cysteine 194 lines the [4Fe-4S] cluster pocket. (2E)-4-hydroxy-3-methylbut-2-enyl diphosphate-binding residues include serine 222, serine 223, asparagine 224, and serine 266. Dimethylallyl diphosphate-binding residues include serine 222, serine 223, asparagine 224, and serine 266. Isopentenyl diphosphate is bound by residues serine 222, serine 223, asparagine 224, and serine 266.

Belongs to the IspH family. [4Fe-4S] cluster serves as cofactor.

The catalysed reaction is isopentenyl diphosphate + 2 oxidized [2Fe-2S]-[ferredoxin] + H2O = (2E)-4-hydroxy-3-methylbut-2-enyl diphosphate + 2 reduced [2Fe-2S]-[ferredoxin] + 2 H(+). It carries out the reaction dimethylallyl diphosphate + 2 oxidized [2Fe-2S]-[ferredoxin] + H2O = (2E)-4-hydroxy-3-methylbut-2-enyl diphosphate + 2 reduced [2Fe-2S]-[ferredoxin] + 2 H(+). It participates in isoprenoid biosynthesis; dimethylallyl diphosphate biosynthesis; dimethylallyl diphosphate from (2E)-4-hydroxy-3-methylbutenyl diphosphate: step 1/1. Its pathway is isoprenoid biosynthesis; isopentenyl diphosphate biosynthesis via DXP pathway; isopentenyl diphosphate from 1-deoxy-D-xylulose 5-phosphate: step 6/6. Functionally, catalyzes the conversion of 1-hydroxy-2-methyl-2-(E)-butenyl 4-diphosphate (HMBPP) into a mixture of isopentenyl diphosphate (IPP) and dimethylallyl diphosphate (DMAPP). Acts in the terminal step of the DOXP/MEP pathway for isoprenoid precursor biosynthesis. This is 4-hydroxy-3-methylbut-2-enyl diphosphate reductase from Protochlamydia amoebophila (strain UWE25).